A 266-amino-acid polypeptide reads, in one-letter code: uncharacterized protein (266 aa).

A PH domain is found at 35-131 (VLVGEGVLVK…WMLHIERCVT (97 aa)). An FYVE-type zinc finger spans residues 152–212 (DGEAVKCMVC…VCDHCFDSLS (61 aa)). Zn(2+)-binding residues include cysteine 158, cysteine 161, cysteine 175, cysteine 178, cysteine 183, cysteine 186, cysteine 204, and cysteine 207. The disordered stretch occupies residues 213–266 (SATPGQEESEPKTGNRLHHEDSSSDSEDEVNGSGRSSNESRPTFYREDVQQPAT). Composition is skewed to basic and acidic residues over residues 221–234 (SEPK…HEDS) and 256–266 (FYREDVQQPAT).

This is an uncharacterized protein from Caenorhabditis elegans.